The primary structure comprises 232 residues: Sugar fermentation stimulation protein homolog (232 aa).

This sequence belongs to the SfsA family.

This is Sugar fermentation stimulation protein homolog from Geobacter sulfurreducens (strain ATCC 51573 / DSM 12127 / PCA).